The chain runs to 361 residues: Aminomethyltransferase (361 aa).

This sequence belongs to the GcvT family. The glycine cleavage system is composed of four proteins: P, T, L and H.

It catalyses the reaction N(6)-[(R)-S(8)-aminomethyldihydrolipoyl]-L-lysyl-[protein] + (6S)-5,6,7,8-tetrahydrofolate = N(6)-[(R)-dihydrolipoyl]-L-lysyl-[protein] + (6R)-5,10-methylene-5,6,7,8-tetrahydrofolate + NH4(+). In terms of biological role, the glycine cleavage system catalyzes the degradation of glycine. This chain is Aminomethyltransferase, found in Bacteroides fragilis (strain ATCC 25285 / DSM 2151 / CCUG 4856 / JCM 11019 / LMG 10263 / NCTC 9343 / Onslow / VPI 2553 / EN-2).